The following is a 1275-amino-acid chain: Membrane-associated guanylate kinase, WW and PDZ domain-containing protein 2 (1275 aa).

One can recognise a PDZ 1 domain in the interval 17 to 101 (ESVIGRNPEG…PLRLKCVKQG (85 aa)). A Guanylate kinase-like domain is found at 109–283 (RHYLNLRFQK…PVYSQPEELK (175 aa)). Residues 203 to 305 (LPGATPSAEG…ENEDSDPLPD (103 aa)) form a disordered region. Over residues 280-295 (EELKDQMDDTKPTKPE) the composition is skewed to basic and acidic residues. 2 WW domains span residues 301–334 (DPLP…DPRL) and 347–380 (NELP…NPVL). The interval 301–380 (DPLPDNWEMA…RRTQFENPVL (80 aa)) is interaction with DDN. Phosphotyrosine is present on Tyr-361. PDZ domains are found at residues 425 to 509 (STTL…CRGY) and 604 to 682 (TLTI…HRGG). The residue at position 685 (Ser-685) is a Phosphoserine. The tract at residues 698-740 (ENQGSPQTSLSAPAVPQNLPFPPALHRSSFPDSTEAFDPRKPD) is disordered. A compositionally biased stretch (polar residues) spans 699–708 (NQGSPQTSLS). The PDZ 4 domain maps to 777 to 859 (DVHLRRMESG…NGQVNLTVRR (83 aa)). Tyr-826 carries the post-translational modification Phosphotyrosine. The interval 868-912 (CPENGRSPGSVSTHHSSPRSDYATYSNSNHAAPSSNASPPEGFAS) is disordered. Phosphoserine occurs at positions 883 and 884. A compositionally biased stretch (low complexity) spans 893 to 907 (SNSNHAAPSSNASPP). The 91-residue stretch at 919 to 1009 (DVVIHRKENE…SVTLRIIPQE (91 aa)) folds into the PDZ 5 domain. The span at 1010–1040 (ELNSPTSAPSSEKQSPMAQQHSPLAQQSPLA) shows a compositional bias: polar residues. The tract at residues 1010 to 1128 (ELNSPTSAPS…PDTRQYPLSD (119 aa)) is disordered. Ser-1013 is modified (phosphoserine). Residues 1067 to 1083 (NSYRSEVKARQDVKPDI) show a composition bias toward basic and acidic residues. The PDZ 6 domain occupies 1139 to 1221 (TVDMEKGAKG…RVRLLLKRGT (83 aa)).

This sequence belongs to the MAGUK family. Interacts (via its WW domains) with DRPLA. Interacts (via its second PDZ domain) with PTEN (via unphosphorylated C-terminus); this interaction diminishes the degradation rate of PTEN. Interacts (via guanylate kinase domain) with DLGAP1. Interacts (via the PDZ domains) with GRIN2A, GRID2 and NLGN1. Interacts with CTNND2, CTNNB1 and MAGUIN-1. Interacts with ACVR2A, SMAD2 and SMAD3. Part of a complex consisting of MAGI2/ARIP1, ACVR2A, ACVR1B and SMAD3. May interact with HTR2A. Interacts with RAPGEF2. Identified in a complex with ACTN4, CASK, IQGAP1, NPHS1, SPTAN1 and SPTBN1. Interacts with DDN. Found in a complex, at least composed of KIDINS220, MAGI2, NTRK1 and RAPGEF2; the complex is mainly formed at late endosomes in a NGF-dependent manner. Interacts with RAPGEF2; the interaction occurs before or after nerve growth factor (NGF) stimulation. Interacts (via PDZ domain) with KIDINS220 (via C-terminal domain). Interacts with IGSF9 and HTR4. Interacts with DLL1. Found in a complex with IGSF9B and NLGN2; the interaction with IGSF9B is mediated via the PDZ 5 and PDZ 6 domains, while the interaction with NLGN2 is mediated via the WW1, WW2 and PDZ2 domains. Interacts (via PDZ 6 domain) with USH1G (via SAM domain); the interaction is triggered by phosphorylation of USH1G by CK2 and negatively regulates MAGI2-mediated endocytosis. As to expression, expressed throughout the retina except in the nuclear layers and the photoreceptor outer segments (at protein level). Highest retinal expression is observed in the outer plexiform layer, the outer limiting membrane and the inner segment of photoreceptor cells (at protein level). Expressed in brain.

The protein localises to the cytoplasm. It is found in the late endosome. It localises to the synapse. The protein resides in the synaptosome. Its subcellular location is the cell membrane. The protein localises to the cytoskeleton. It is found in the microtubule organizing center. It localises to the centrosome. The protein resides in the cell projection. Its subcellular location is the cilium. The protein localises to the centriole. It is found in the photoreceptor inner segment. It localises to the photoreceptor outer segment. Its function is as follows. Seems to act as a scaffold molecule at synaptic junctions by assembling neurotransmitter receptors and cell adhesion proteins. Plays a role in nerve growth factor (NGF)-induced recruitment of RAPGEF2 to late endosomes and neurite outgrowth. May play a role in regulating activin-mediated signaling in neuronal cells. Enhances the ability of PTEN to suppress AKT1 activation. Plays a role in receptor-mediated clathrin-dependent endocytosis which is required for ciliogenesis. This Mus musculus (Mouse) protein is Membrane-associated guanylate kinase, WW and PDZ domain-containing protein 2 (Magi2).